Here is a 215-residue protein sequence, read N- to C-terminus: Small ribosomal subunit protein bS6 (215 aa).

Disordered stretches follow at residues 121–153 (RENN…QKPK) and 187–215 (NQRQ…KDKQ). The span at 144–153 (SRTEKAQKPK) shows a compositional bias: basic and acidic residues. Over residues 188 to 198 (QRQNQQNNNNN) the composition is skewed to low complexity. Residues 199 to 215 (RFDRNRNRQHNRFKDKQ) are compositionally biased toward basic and acidic residues.

Belongs to the bacterial ribosomal protein bS6 family.

Its function is as follows. Binds together with bS18 to 16S ribosomal RNA. This Mycoplasma pneumoniae (strain ATCC 29342 / M129 / Subtype 1) (Mycoplasmoides pneumoniae) protein is Small ribosomal subunit protein bS6 (rpsF).